Reading from the N-terminus, the 147-residue chain is MAEVLSFMDVKRQKDFELEKNLLKELSLRQIIQSVKDCLEPLFPFLHDERDIITEGCIDFAIEAYLLGGRFGIFGYYGESMQSISARSAREEEELRMEFFDYLYNWIHEQYATFDKNTVYEAARKFIKDWWTAGFVQREKQCKLRMR.

This is an uncharacterized protein from Bacillus subtilis (strain 168).